The following is a 76-amino-acid chain: ATP synthase subunit 9, mitochondrial (76 aa).

The next 2 helical transmembrane spans lie at 11–31 (IGAG…GIVF) and 53–73 (ILGF…AFLI).

The protein belongs to the ATPase C chain family. F-type ATPases have 2 components, CF(1) - the catalytic core - and CF(0) - the membrane proton channel. CF(1) has five subunits: alpha(3), beta(3), gamma(1), delta(1), epsilon(1). CF(0) has three main subunits: a, b and c.

Its subcellular location is the mitochondrion membrane. In terms of biological role, this protein is one of the chains of the nonenzymatic membrane component (F0) of mitochondrial ATPase. The sequence is that of ATP synthase subunit 9, mitochondrial (ATP9) from Chondrus crispus (Carrageen Irish moss).